Here is a 116-residue protein sequence, read N- to C-terminus: MSIRTEKVASLLQQELGMILEKEFPRGGPILTVVEVKVTADLGIAKVYVSVIGSAKEQADTIEYLQQEKKNIRKILSSKIRHHFRRIPELEFYQDRLYEKADRIEQLLKEVRKEQE.

It belongs to the RbfA family. As to quaternary structure, monomer. Binds 30S ribosomal subunits, but not 50S ribosomal subunits or 70S ribosomes.

It is found in the cytoplasm. One of several proteins that assist in the late maturation steps of the functional core of the 30S ribosomal subunit. Associates with free 30S ribosomal subunits (but not with 30S subunits that are part of 70S ribosomes or polysomes). Required for efficient processing of 16S rRNA. May interact with the 5'-terminal helix region of 16S rRNA. This Chlorobium phaeobacteroides (strain DSM 266 / SMG 266 / 2430) protein is Ribosome-binding factor A.